Consider the following 435-residue polypeptide: Tol-Pal system protein TolB (435 aa).

The N-terminal stretch at 1-26 (MKIFSPIRLVLAIAALMSVFSAPAFA) is a signal peptide.

It belongs to the TolB family. In terms of assembly, the Tol-Pal system is composed of five core proteins: the inner membrane proteins TolA, TolQ and TolR, the periplasmic protein TolB and the outer membrane protein Pal. They form a network linking the inner and outer membranes and the peptidoglycan layer.

It localises to the periplasm. Its function is as follows. Part of the Tol-Pal system, which plays a role in outer membrane invagination during cell division and is important for maintaining outer membrane integrity. In Agrobacterium fabrum (strain C58 / ATCC 33970) (Agrobacterium tumefaciens (strain C58)), this protein is Tol-Pal system protein TolB.